The chain runs to 249 residues: SRR1-like protein (249 aa).

Residues 1–40 (MAAAALEPWSAVAPRRRKRAAGRRPRPGEGPRAEPEADGE) are disordered. Positions 14-25 (PRRRKRAAGRRP) are enriched in basic residues. Residues 26–40 (RPGEGPRAEPEADGE) show a composition bias toward basic and acidic residues.

It belongs to the SRR1 family.

The protein resides in the cytoplasm. Its function is as follows. Plays a role in the regulation of heme biosynthesis and in the regulation of the expression of core clock genes. In Mus musculus (Mouse), this protein is SRR1-like protein (Srrd).